The primary structure comprises 59 residues: Dendroaspin (59 aa).

Cystine bridges form between Cys3–Cys22, Cys17–Cys37, Cys39–Cys51, and Cys52–Cys57. A Cell attachment site motif is present at residues 43 to 45; it reads RGD.

This sequence belongs to the three-finger toxin family. Short-chain subfamily. Antiplatelet toxin sub-subfamily. In terms of tissue distribution, expressed by the venom gland.

Its subcellular location is the secreted. Its function is as follows. Inhibits ADP-induced platelet aggregation and inhibits the binding of purified platelet fibrinogen receptor alpha-IIb/beta-3 (ITGA2B/ITGB3) to immobilized fibrinogen. Has also been described to inhibit cell adhesion to fibrinogen, fibronectin, laminin and collagen. This is Dendroaspin from Dendroaspis jamesoni kaimosae (Eastern Jameson's mamba).